Consider the following 348-residue polypeptide: 5-deoxyribose 1-phosphate isomerase (348 aa).

Substrate-binding positions include 49–51, Arg-92, and Gln-199; that span reads RGA. The Proton donor role is filled by Asp-240. 250–251 lines the substrate pocket; that stretch reads NK.

This sequence belongs to the EIF-2B alpha/beta/delta subunits family. DrdI subfamily. As to quaternary structure, homodimer.

It carries out the reaction 5-deoxy-alpha-D-ribose 1-phosphate = 5-deoxy-D-ribulose 1-phosphate. It catalyses the reaction 5-(methylsulfanyl)-alpha-D-ribose 1-phosphate = 5-(methylsulfanyl)-D-ribulose 1-phosphate. It functions in the pathway carbohydrate degradation. Functionally, catalyzes the isomerization of 5-deoxy-alpha-D-ribose 1-phosphate to 5-deoxy-D-ribulose 1-phosphate, as part of a 5-deoxyribose salvage pathway that recycles this toxic radical SAM enzyme by-product to mainstream metabolites. Also seems to be able to catalyze the conversion of methylthioribose-1-phosphate (MTR-1-P) into methylthioribulose-1-phosphate (MTRu-1-P). However this enzyme may not function in methionine salvage in B.thuringiensis since it exists a paralog (MtnA) present in the methionine salvage pathway cluster. In Bacillus thuringiensis serovar kurstaki (strain ATCC 35866 / NRRL B-4488 / HD73), this protein is 5-deoxyribose 1-phosphate isomerase.